Consider the following 900-residue polypeptide: Alanine--tRNA ligase (900 aa).

Residues His-604, His-608, Cys-708, and His-712 each contribute to the Zn(2+) site.

The protein belongs to the class-II aminoacyl-tRNA synthetase family. Zn(2+) is required as a cofactor.

It is found in the cytoplasm. The catalysed reaction is tRNA(Ala) + L-alanine + ATP = L-alanyl-tRNA(Ala) + AMP + diphosphate. Its function is as follows. Catalyzes the attachment of alanine to tRNA(Ala) in a two-step reaction: alanine is first activated by ATP to form Ala-AMP and then transferred to the acceptor end of tRNA(Ala). Also edits incorrectly charged Ser-tRNA(Ala) and Gly-tRNA(Ala) via its editing domain. This chain is Alanine--tRNA ligase, found in Saccharolobus islandicus (strain Y.G.57.14 / Yellowstone #1) (Sulfolobus islandicus).